We begin with the raw amino-acid sequence, 295 residues long: Ribosomal protein L11 methyltransferase (295 aa).

S-adenosyl-L-methionine contacts are provided by T146, G167, D189, and N231.

The protein belongs to the methyltransferase superfamily. PrmA family.

It localises to the cytoplasm. It catalyses the reaction L-lysyl-[protein] + 3 S-adenosyl-L-methionine = N(6),N(6),N(6)-trimethyl-L-lysyl-[protein] + 3 S-adenosyl-L-homocysteine + 3 H(+). Functionally, methylates ribosomal protein L11. This is Ribosomal protein L11 methyltransferase from Vibrio cholerae serotype O1 (strain M66-2).